The following is a 715-amino-acid chain: Protein DOA1 (715 aa).

7 WD repeats span residues 11 to 40, 53 to 82, 97 to 125, 135 to 166, 177 to 206, 218 to 247, and 259 to 288; these read GHDQ…RLWS, GQGF…NGVP, GHQG…KVWK, AHNA…KLWQ, IHND…KLVD, GHES…RIWS, and LPAI…RIFS. The residue at position 332 (Ser332) is a Phosphoserine. The 98-residue stretch at 352–449 folds into the PFU domain; the sequence is AHQFSNSSWK…NGISLDQPND (98 aa). The segment at 434-440 is interaction with HSE1; it reads FILKNTN. A PUL domain is found at 465–715; sequence KVLPVKQYLI…RFKDIFDDLS (251 aa). ARM repeat units lie at residues 478–512, 513–543, 544–582, 583–635, 636–680, and 681–715; these read YNPD…LHDI, DESW…VRLI, VKKL…CFNN, ENWG…LVTK, GNSD…LATV, and EPTL…DDLS.

Belongs to the WD repeat PLAP family. In terms of assembly, forms a complex composed of CDC48, NPL4, UFD1, DOA1, SHP1 and deubiquitinase OTU1; within the complex interacts with CDC48. Interacts (via PUL domain) with CDC48 (via C-terminus); the interaction is direct. Forms a complex composed of CDC48, DOA1, deubiquitinase UBP3 and probably BRE5; within the complex interacts with CDC48 and UBP3. May form a complex composed of VPS27, HSE1 and DOA1. Interacts with HSE1 (via SH3 domain). Interacts (via WD repeats and PFU domain) with ubiquitin; the interaction is direct. Interacts with ubiquitinated FZO1 but not unmodified FZO1; the interaction recruits FZO1 to CDC48 and promotes FZO1 proteasomal degradation.

Its subcellular location is the nucleus. It is found in the cytoplasm. It localises to the mitochondrion outer membrane. The protein localises to the endosome membrane. In terms of biological role, ubiquitin-binding protein involved in protein ubiquitination, sorting and degradation. Acts as a ubiquitinated substrate-recruiting adapter for chaperone ATPase CDC48 by binding mono- or polyubiquitin chains. Depending on the context, promotes or prevents proteasomal degradation of ubiquitinated proteins. Involved in the ubiquitin fusion degradation (UFD) pathway by promoting the degradation of ubiquitinated proteins. Involved in the mitochondria-associated degradation pathway (MAD) by promoting the degradation of several ubiquitinated membrane proteins. By competing with UFD2 to bind CDC48, prevents the multi-ubiquitination and subsequent degradation of UFD2-dependent substrates. Required for ribophagy, a process which relocalizes ribosomal particles into the vacuole for degradation in response to starvation. Involved in the ubiquitin-mediated sorting of membrane proteins into multivesicular bodies (MVBs). In addition, plays an essential role in maintaining cellular ubiquitin levels. May affect indirectly the degradation of ubiquitinylated proteins by regulating cellular ubiquitin levels. This is Protein DOA1 from Saccharomyces cerevisiae (strain ATCC 204508 / S288c) (Baker's yeast).